The primary structure comprises 78 residues: uncharacterized protein (78 aa).

This is an uncharacterized protein from Methanocaldococcus jannaschii (strain ATCC 43067 / DSM 2661 / JAL-1 / JCM 10045 / NBRC 100440) (Methanococcus jannaschii).